We begin with the raw amino-acid sequence, 298 residues long: NADH-cytochrome b5 reductase 2 (298 aa).

A helical transmembrane segment spans residues 15–38 (FVLPVAAAAVGLASYSFTSSSFIA). The FAD-binding FR-type domain maps to 49-153 (DEWIDLKLIS…KGPFVKWKWE (105 aa)). 156–191 (QFKSIALIGGGTGITPLYQLIHEITKNPADKTQVSL) is an FAD binding site.

Belongs to the flavoprotein pyridine nucleotide cytochrome reductase family. It depends on FAD as a cofactor.

Its subcellular location is the mitochondrion outer membrane. It catalyses the reaction 2 Fe(III)-[cytochrome b5] + NADH = 2 Fe(II)-[cytochrome b5] + NAD(+) + H(+). Its function is as follows. May mediate the reduction of outer membrane cytochrome b5. The protein is NADH-cytochrome b5 reductase 2 (MCR1) of Scheffersomyces stipitis (strain ATCC 58785 / CBS 6054 / NBRC 10063 / NRRL Y-11545) (Yeast).